We begin with the raw amino-acid sequence, 294 residues long: Holothin acyltransferase (294 aa).

Positions 17 to 146 (WTSKPASLEE…SRLVGIHNQQ (130 aa)) constitute an N-acetyltransferase domain.

The enzyme catalyses marinoloyl-CoA C + holothin = thiomarinol C + CoA. It catalyses the reaction pseudomonoyl-CoA C + holothin = pseudomonic acid C--holothin + CoA. The protein operates within antibiotic biosynthesis. Its function is as follows. Acyltransferase that catalyzes the formation of pseudomonic acid C-holothin (PAC-holothin), a thiomarinol analog, from pseudomonoyl-CoA C (PAC-CoA) and holothin. Accepts linear CoA substrates of different lengths, including propionyl-, hexanoyl-, octanoyl-, oleoyl- and dodecanoyl-CoA, readily converting all into the corresponding acyl-holothin adducts. In vivo, is probably involved in the biosynthesis of thiomarinol, a naturally occurring double-headed antibiotic. The polypeptide is Holothin acyltransferase (Pseudoalteromonas sp. (strain SANK 73390)).